Here is a 176-residue protein sequence, read N- to C-terminus: Inorganic pyrophosphatase (176 aa).

Substrate contacts are provided by Lys30, Arg44, and Tyr56. Asp66, Asp71, and Asp103 together coordinate Mg(2+). Residue Tyr142 coordinates substrate.

It belongs to the PPase family. Homohexamer. Mg(2+) serves as cofactor.

It is found in the cytoplasm. The enzyme catalyses diphosphate + H2O = 2 phosphate + H(+). Catalyzes the hydrolysis of inorganic pyrophosphate (PPi) forming two phosphate ions. The polypeptide is Inorganic pyrophosphatase (Salmonella typhi).